The sequence spans 338 residues: Fructose-1,6-bisphosphatase class 1 (338 aa).

Mg(2+)-binding residues include Glu-92, Asp-114, Leu-116, and Asp-117. Substrate contacts are provided by residues 117–120 (DGSS) and Asn-210. Glu-284 contacts Mg(2+).

It belongs to the FBPase class 1 family. In terms of assembly, homotetramer. Mg(2+) serves as cofactor.

The protein localises to the cytoplasm. The catalysed reaction is beta-D-fructose 1,6-bisphosphate + H2O = beta-D-fructose 6-phosphate + phosphate. It participates in carbohydrate biosynthesis; gluconeogenesis. This Halorhodospira halophila (strain DSM 244 / SL1) (Ectothiorhodospira halophila (strain DSM 244 / SL1)) protein is Fructose-1,6-bisphosphatase class 1.